The chain runs to 178 residues: Plasmid transfer protein TraF (178 aa).

Positions 1 to 30 (MSRILKRIAAGVVIAGVAALLLAAGGYAAG) are cleaved as a signal peptide.

This sequence belongs to the peptidase S26C family.

The protein resides in the periplasm. Functionally, required for donor-specific phage sensitivity. May be involved in pilus assembly. This chain is Plasmid transfer protein TraF (traF), found in Escherichia coli.